Here is a 342-residue protein sequence, read N- to C-terminus: RNA 3'-terminal phosphate cyclase (342 aa).

Residues Gln-102 and 283 to 287 (HLADQ) each bind ATP. His-308 functions as the Tele-AMP-histidine intermediate in the catalytic mechanism.

The protein belongs to the RNA 3'-terminal cyclase family. Type 1 subfamily.

It localises to the cytoplasm. The enzyme catalyses a 3'-end 3'-phospho-ribonucleotide-RNA + ATP = a 3'-end 2',3'-cyclophospho-ribonucleotide-RNA + AMP + diphosphate. In terms of biological role, catalyzes the conversion of 3'-phosphate to a 2',3'-cyclic phosphodiester at the end of RNA. The mechanism of action of the enzyme occurs in 3 steps: (A) adenylation of the enzyme by ATP; (B) transfer of adenylate to an RNA-N3'P to produce RNA-N3'PP5'A; (C) and attack of the adjacent 2'-hydroxyl on the 3'-phosphorus in the diester linkage to produce the cyclic end product. The biological role of this enzyme is unknown but it is likely to function in some aspects of cellular RNA processing. The polypeptide is RNA 3'-terminal phosphate cyclase (Pseudomonas fluorescens (strain ATCC BAA-477 / NRRL B-23932 / Pf-5)).